A 77-amino-acid polypeptide reads, in one-letter code: DNA-directed RNA polymerase subunit Rpo5 (77 aa).

Belongs to the archaeal Rpo5/eukaryotic RPB5 RNA polymerase subunit family. Part of the RNA polymerase complex.

Its subcellular location is the cytoplasm. It carries out the reaction RNA(n) + a ribonucleoside 5'-triphosphate = RNA(n+1) + diphosphate. In terms of biological role, DNA-dependent RNA polymerase (RNAP) catalyzes the transcription of DNA into RNA using the four ribonucleoside triphosphates as substrates. The chain is DNA-directed RNA polymerase subunit Rpo5 from Methanothermobacter thermautotrophicus (strain ATCC 29096 / DSM 1053 / JCM 10044 / NBRC 100330 / Delta H) (Methanobacterium thermoautotrophicum).